The sequence spans 157 residues: MFLRQEDFAAVVRTTPLISLDFIVENGQGEILLGQRLNRPAQGYWFVPGGRVCKDETLEAAFARLTQAELGVRLPLAAGTFYGVWQHFYDDNFSSEDFSTHYIVLGFRLRVAESDLRLPDAQHGSYRWLTPEQLLAGDNVHENSRAYFSPDAPAVGL.

Residues 2-3 (FL), phenylalanine 8, and arginine 36 each bind substrate. In terms of domain architecture, Nudix hydrolase spans 3–153 (LRQEDFAAVV…SRAYFSPDAP (151 aa)). Residues glycine 49, glutamate 69, and glutamine 122 each coordinate Mg(2+). Positions 50-71 (GRVCKDETLEAAFARLTQAELG) match the Nudix box motif.

The protein belongs to the Nudix hydrolase family. In terms of assembly, homodimer. The cofactor is Mg(2+).

The enzyme catalyses GDP-alpha-D-mannose + H2O = D-mannose + GDP + H(+). Hydrolyzes GDP-mannose. This chain is GDP-mannose mannosyl hydrolase, found in Salmonella typhi.